We begin with the raw amino-acid sequence, 1055 residues long: Elongation factor 3 (1055 aa).

An ADP-binding site is contributed by Val-45. 7 HEAT repeats span residues 48–86, 96–133, 134–172, 176–213, 218–255, 257–290, and 296–337; these read FTQI…NGAA, SAEN…SMNP, WASF…SAPF, EAMP…LVEN, KFVP…APTI, LIAP…LVDS, and PFLP…VPAE. 2 ABC transporter domains span residues 447-659 and 687-1004; these read CNIE…SYYQ and LKMR…KKAA. Residues Asn-723, Glu-933, Asn-936, and His-962 each contribute to the ADP site. A disordered region spans residues 1024-1055; sequence EKKLSAADKRKAKKDRMARRKRGEEVFSDEEL. Residues 1033-1044 show a composition bias toward basic residues; that stretch reads RKAKKDRMARRK.

It belongs to the ABC transporter superfamily. ABCF family. EF3 subfamily. In terms of assembly, interacts with CCH1; the interaction is direct and required for the localization of CCH1 to the cell membrane.

Its subcellular location is the cytoplasm. The protein localises to the cytosol. It catalyses the reaction ATP + H2O = ADP + phosphate + H(+). Its pathway is protein biosynthesis; polypeptide chain elongation. Functionally, ribosome-dependent ATPase that functions in cytoplasmic translation elongation. Required for the ATP-dependent release of deacylated tRNA from the ribosomal E-site during protein biosynthesis. Stimulates the eEF1A-dependent binding of aminoacyl-tRNA to the ribosomal A-site, which has reduced affinity for tRNA as long as the E-site is occupied. Assists translation termination by stimulating the release of nascent protein from the ribosome by release factors. Appears to localize calcium-channel protein CCH1 to the plasma membrane. This chain is Elongation factor 3, found in Cryptococcus neoformans var. grubii serotype A (strain H99 / ATCC 208821 / CBS 10515 / FGSC 9487) (Filobasidiella neoformans var. grubii).